A 101-amino-acid polypeptide reads, in one-letter code: Small ribosomal subunit protein uS14 (101 aa).

Belongs to the universal ribosomal protein uS14 family. Part of the 30S ribosomal subunit. Contacts proteins S3 and S10.

Its function is as follows. Binds 16S rRNA, required for the assembly of 30S particles and may also be responsible for determining the conformation of the 16S rRNA at the A site. The sequence is that of Small ribosomal subunit protein uS14 from Shewanella woodyi (strain ATCC 51908 / MS32).